The primary structure comprises 461 residues: Cysteine--tRNA ligase (461 aa).

Zn(2+) is bound at residue Cys28. The 'HIGH' region signature appears at 30–40; the sequence is ITVYDLCHIGH. Residues Cys209, His234, and Glu238 each contribute to the Zn(2+) site. Residues 266 to 270 carry the 'KMSKS' region motif; the sequence is KMSKS. Residue Lys269 participates in ATP binding.

This sequence belongs to the class-I aminoacyl-tRNA synthetase family. Monomer. Requires Zn(2+) as cofactor.

Its subcellular location is the cytoplasm. The catalysed reaction is tRNA(Cys) + L-cysteine + ATP = L-cysteinyl-tRNA(Cys) + AMP + diphosphate. In Escherichia coli O127:H6 (strain E2348/69 / EPEC), this protein is Cysteine--tRNA ligase.